The following is an 810-amino-acid chain: Phenylalanine--tRNA ligase beta subunit (810 aa).

The tRNA-binding domain occupies 39–151 (RTWAAGVVVG…AGLQAGQPVG (113 aa)). The 87-residue stretch at 408-494 (EPEHSITLRL…RLYGYDNFGE (87 aa)) folds into the B5 domain. Positions 472, 478, 481, and 482 each coordinate Mg(2+). The region spanning 716–809 (SSFPASDRDL…LVERFRVTLR (94 aa)) is the FDX-ACB domain.

This sequence belongs to the phenylalanyl-tRNA synthetase beta subunit family. Type 1 subfamily. As to quaternary structure, tetramer of two alpha and two beta subunits. Requires Mg(2+) as cofactor.

Its subcellular location is the cytoplasm. The catalysed reaction is tRNA(Phe) + L-phenylalanine + ATP = L-phenylalanyl-tRNA(Phe) + AMP + diphosphate + H(+). The chain is Phenylalanine--tRNA ligase beta subunit (pheT) from Synechococcus elongatus (strain ATCC 33912 / PCC 7942 / FACHB-805) (Anacystis nidulans R2).